The sequence spans 437 residues: UDP-N-acetylmuramoylalanine--D-glutamate ligase (437 aa).

115–121 (GSNGKST) contacts ATP.

The protein belongs to the MurCDEF family.

Its subcellular location is the cytoplasm. The catalysed reaction is UDP-N-acetyl-alpha-D-muramoyl-L-alanine + D-glutamate + ATP = UDP-N-acetyl-alpha-D-muramoyl-L-alanyl-D-glutamate + ADP + phosphate + H(+). The protein operates within cell wall biogenesis; peptidoglycan biosynthesis. Cell wall formation. Catalyzes the addition of glutamate to the nucleotide precursor UDP-N-acetylmuramoyl-L-alanine (UMA). The chain is UDP-N-acetylmuramoylalanine--D-glutamate ligase from Vibrio campbellii (strain ATCC BAA-1116).